The chain runs to 376 residues: Serine-arginine protein 55 (376 aa).

Residues Ser-4 to Gly-74 form the RRM 1 domain. Residues Arg-73–Pro-114 are disordered. The segment covering Ser-79–Gly-89 has biased composition (basic and acidic residues). Positions Tyr-120 to Arg-193 constitute an RRM 2 domain. The residue at position 165 (Ser-165) is a Phosphoserine. Basic and acidic residues predominate over residues Arg-185–Gly-194. Residues Arg-185–Asp-376 are disordered. Gly residues predominate over residues Arg-196–Arg-205. Composition is skewed to basic residues over residues Ser-215–Asn-263 and Ser-271–Ser-283. The segment covering Pro-284 to Ser-304 has biased composition (basic and acidic residues).

Belongs to the splicing factor SR family. Post-translationally, extensively phosphorylated on serine residues in the RS domain.

It localises to the nucleus. Its function is as follows. Essential for development. May have a critical role in splicing or in controlling alternative splice site use of at least some pre-mRNA in vivo. Not required for all splicing. May play a general role in the condensation or decondensation of chromatin. The chain is Serine-arginine protein 55 (B52) from Drosophila melanogaster (Fruit fly).